The primary structure comprises 342 residues: Outer membrane porin C (342 aa).

It belongs to the Gram-negative porin family. Homotrimer.

Its subcellular location is the cell outer membrane. Functionally, forms pores that allow passive diffusion of small molecules across the outer membrane. In R.aquatilis OmpC is involved in the adhesion to wheat roots. The protein is Outer membrane porin C (ompC) of Rahnella aquatilis.